We begin with the raw amino-acid sequence, 430 residues long: Tol-Pal system protein TolB (430 aa).

The N-terminal stretch at Met1–Ala21 is a signal peptide.

The protein belongs to the TolB family. The Tol-Pal system is composed of five core proteins: the inner membrane proteins TolA, TolQ and TolR, the periplasmic protein TolB and the outer membrane protein Pal. They form a network linking the inner and outer membranes and the peptidoglycan layer.

Its subcellular location is the periplasm. In terms of biological role, part of the Tol-Pal system, which plays a role in outer membrane invagination during cell division and is important for maintaining outer membrane integrity. This Syntrophotalea carbinolica (strain DSM 2380 / NBRC 103641 / GraBd1) (Pelobacter carbinolicus) protein is Tol-Pal system protein TolB.